The chain runs to 307 residues: Oxygen-dependent coproporphyrinogen-III oxidase (307 aa).

Substrate is bound at residue serine 97. A divalent metal cation-binding residues include histidine 101 and histidine 111. The active-site Proton donor is the histidine 111. A substrate-binding site is contributed by 113-115 (NVR). 2 residues coordinate a divalent metal cation: histidine 152 and histidine 182. The important for dimerization stretch occupies residues 247-282 (YVEFNLVWDRGTHFGLQSGGRTESILMSMPPLASWS). 265–267 (GGR) contributes to the substrate binding site.

The protein belongs to the aerobic coproporphyrinogen-III oxidase family. In terms of assembly, homodimer. It depends on a divalent metal cation as a cofactor.

It localises to the cytoplasm. The catalysed reaction is coproporphyrinogen III + O2 + 2 H(+) = protoporphyrinogen IX + 2 CO2 + 2 H2O. It functions in the pathway porphyrin-containing compound metabolism; protoporphyrin-IX biosynthesis; protoporphyrinogen-IX from coproporphyrinogen-III (O2 route): step 1/1. Its function is as follows. Involved in the heme biosynthesis. Catalyzes the aerobic oxidative decarboxylation of propionate groups of rings A and B of coproporphyrinogen-III to yield the vinyl groups in protoporphyrinogen-IX. The sequence is that of Oxygen-dependent coproporphyrinogen-III oxidase from Polaromonas naphthalenivorans (strain CJ2).